A 379-amino-acid polypeptide reads, in one-letter code: MKILRKNHPLLKIINHSFIDLPTPSNISSWWNFGSLLGMCLMIQILTGLFLAMHYTSDTTTAFSSVAHICRDVNYGWLIRYLHANGASMFFICLFIHVGRGIYYGSYALSETWNIGIILFLMTMATAFVGYVLPWGQMSFWGATVITNLLSAIPYIGSTLVEWIWGGFSVDKATLTRFFAFHFILPFIIAAFALVHLLFLHETGSNNPSGLNSDSDKIPFHPYYTTKDLLGIFLLLLVLMILALFFPDVLGDPDNFTPANPLNTPAHIKPEWYFLFAYAILRSIPNKLGGVLALILSILILAAFPLLNNSKQHGLIFRPVTQVIYWIFTANLLVLTWIGGQPVEYPFTMIGQIASITYLAIIIILMPISNTIENNIIKL.

Helical transmembrane passes span 33-53 (FGSL…FLAM), 77-98 (WLIR…FIHV), 113-133 (WNIG…GYVL), and 178-198 (FFAF…VHLL). 2 residues coordinate heme b: His83 and His97. Positions 182 and 196 each coordinate heme b. Position 201 (His201) interacts with a ubiquinone. 4 consecutive transmembrane segments (helical) span residues 226-246 (TKDL…ALFF), 288-308 (LGGV…PLLN), 320-340 (VTQV…WIGG), and 347-367 (FTMI…ILMP).

It belongs to the cytochrome b family. The cytochrome bc1 complex contains 11 subunits: 3 respiratory subunits (MT-CYB, CYC1 and UQCRFS1), 2 core proteins (UQCRC1 and UQCRC2) and 6 low-molecular weight proteins (UQCRH/QCR6, UQCRB/QCR7, UQCRQ/QCR8, UQCR10/QCR9, UQCR11/QCR10 and a cleavage product of UQCRFS1). This cytochrome bc1 complex then forms a dimer. Requires heme b as cofactor.

Its subcellular location is the mitochondrion inner membrane. Component of the ubiquinol-cytochrome c reductase complex (complex III or cytochrome b-c1 complex) that is part of the mitochondrial respiratory chain. The b-c1 complex mediates electron transfer from ubiquinol to cytochrome c. Contributes to the generation of a proton gradient across the mitochondrial membrane that is then used for ATP synthesis. In Akodon kofordi (Koford's grass mouse), this protein is Cytochrome b (MT-CYB).